A 358-amino-acid chain; its full sequence is Peptide chain release factor 1 (358 aa).

Gln236 is modified (N5-methylglutamine).

It belongs to the prokaryotic/mitochondrial release factor family. In terms of processing, methylated by PrmC. Methylation increases the termination efficiency of RF1.

The protein resides in the cytoplasm. Peptide chain release factor 1 directs the termination of translation in response to the peptide chain termination codons UAG and UAA. This is Peptide chain release factor 1 from Corynebacterium glutamicum (strain ATCC 13032 / DSM 20300 / JCM 1318 / BCRC 11384 / CCUG 27702 / LMG 3730 / NBRC 12168 / NCIMB 10025 / NRRL B-2784 / 534).